Consider the following 475-residue polypeptide: Rho GTPase-activating protein 15 (475 aa).

A compositionally biased stretch (polar residues) spans 1-22 (MQKSTNSDTSVETLNSTRQGTG). The tract at residues 1 to 23 (MQKSTNSDTSVETLNSTRQGTGA) is disordered. Residues S43, S103, S196, S199, and S243 each carry the phosphoserine modification. Residues 79–189 (MVEKEGYLQK…WFHAIKNAID (111 aa)) form the PH domain. One can recognise a Rho-GAP domain in the interval 281-470 (SHLHKVCERE…LMLSEYSKIF (190 aa)).

Expressed in lung, liver and lymphoid cells.

The protein resides in the cytoplasm. It is found in the membrane. Its function is as follows. GTPase activator for the Rho-type GTPases by converting them to an inactive GDP-bound state. Has activity toward RAC1. Overexpression results in an increase in actin stress fibers and cell contraction. This chain is Rho GTPase-activating protein 15 (ARHGAP15), found in Homo sapiens (Human).